A 416-amino-acid polypeptide reads, in one-letter code: Transmembrane protease serine 11B (416 aa).

Over 1-17 (MYRHGISSQRSWPLWTT) the chain is Cytoplasmic. The helical; Signal-anchor for type II membrane protein transmembrane segment at 18–38 (IFIFLGVAAILGVTIGLLVHF) threads the bilayer. At 39 to 416 (LAVEKTYYYQ…RNWITSKTGL (378 aa)) the chain is on the extracellular side. An SEA domain is found at 43 to 160 (KTYYYQGDFH…ASIKLMEISK (118 aa)). Residues N72 and N107 are each glycosylated (N-linked (GlcNAc...) asparagine). Residues 185–415 (IVNGKSSLEG…YRNWITSKTG (231 aa)) form the Peptidase S1 domain. A disulfide bridge connects residues C210 and C226. Catalysis depends on charge relay system residues H225 and D270. An N-linked (GlcNAc...) asparagine glycan is attached at N315. Cystine bridges form between C335–C351 and C362–C391. S366 acts as the Charge relay system in catalysis.

The protein belongs to the peptidase S1 family.

It localises to the cell membrane. Inhibited by aprotinin, leupeptin, benzamidine, SERPINA1, SPINT1 and SPINT2. Serine protease. In Homo sapiens (Human), this protein is Transmembrane protease serine 11B (TMPRSS11B).